A 176-amino-acid chain; its full sequence is Retinol-binding protein 4-A (176 aa).

N-acetylserine is present on Ser1. Cystine bridges form between Cys3-Cys159, Cys69-Cys173, and Cys119-Cys128. Gln97 lines the substrate pocket.

This sequence belongs to the calycin superfamily. Lipocalin family.

The protein resides in the secreted. Functionally, RBP delivers retinol from the liver stores to the peripheral tissues. In plasma, the RBP-retinol complex interacts with transthyretin, this prevents its loss by filtration through the kidney glomeruli. The polypeptide is Retinol-binding protein 4-A (rbp4a) (Oncorhynchus mykiss (Rainbow trout)).